Here is a 219-residue protein sequence, read N- to C-terminus: MASVTDGKAGVKDASDQNFDYMFKLLIIGNSSVGKTSFLFRYADDTFTPAFVSTVGIDFKVKTVYRHEKRVKLQIWDTAGQERYRTITTAYYRGAMGFILMYDITNEESFNAVQDWATQIKTYSWDNAQVILVGNKCDMEEERVVPTEKGRLLAEQLGFDFFEASAKENISVRQAFERLVDAICDKMSDTLDTDPSLLGTSKNTRLSDTPPLLQQNCSC.

Ala2 carries the N-acetylalanine modification. GTP-binding residues include Ser31, Ser32, Val33, Gly34, Lys35, Thr36, Ser37, Pro49, and Ser53. A Mg(2+)-binding site is contributed by Thr36. A Switch 1 motif is present at residues 45–58 (DTFTPAFVSTVGID). 2 residues coordinate Mg(2+): Thr54 and Asp77. The short motif at 78–96 (TAGQERYRTITTAYYRGAM) is the Switch 2 element. A GTP-binding site is contributed by Gly80. Thr86 is subject to Phosphothreonine. GTP-binding residues include Asn135, Lys136, Asp138, Ala166, and Lys167. Ser188 is modified (phosphoserine). S-geranylgeranyl cysteine attachment occurs at residues Cys217 and Cys219. Cys219 bears the Cysteine methyl ester mark.

This sequence belongs to the small GTPase superfamily. Rab family. Interacts with RIMS1, RIMS2, RPH3A and RPH3AL. The GTP-bound form interacts with GAS8/DRC4 (via coiled-coil domains). Interacts with GDI2, CHM and CHML; phosphorylation at Thr-86 disrupts these interactions. Interacts with MADD (via uDENN domain); the GTP-bound form is preferred for interaction. Mg(2+) is required as a cofactor. In terms of processing, phosphorylation of Thr-86 in the switch II region by LRRK2 prevents the association of RAB regulatory proteins, including CHM, CHML and RAB GDP dissociation inhibitor GDI2.

It is found in the cell membrane. It localises to the golgi apparatus. The catalysed reaction is GTP + H2O = GDP + phosphate + H(+). Regulated by guanine nucleotide exchange factors (GEFs) which promote the exchange of bound GDP for free GTP. Regulated by GTPase activating proteins (GAPs) which increase the GTP hydrolysis activity. Inhibited by GDP dissociation inhibitors (GDIs) which prevent Rab-GDP dissociation. Functionally, the small GTPases Rab are key regulators of intracellular membrane trafficking, from the formation of transport vesicles to their fusion with membranes. Rabs cycle between an inactive GDP-bound form and an active GTP-bound form that is able to recruit to membranes different sets of downstream effectors directly responsible for vesicle formation, movement, tethering and fusion. This chain is Ras-related protein Rab-3B (RAB3B), found in Bos taurus (Bovine).